A 131-amino-acid chain; its full sequence is Putative gamma-taxilin 2 (131 aa).

This sequence belongs to the taxilin family.

The chain is Putative gamma-taxilin 2 (TXLNGY) from Pan troglodytes (Chimpanzee).